An 85-amino-acid polypeptide reads, in one-letter code: Large ribosomal subunit protein bL31B (85 aa).

It belongs to the bacterial ribosomal protein bL31 family. Type B subfamily. As to quaternary structure, part of the 50S ribosomal subunit.

The chain is Large ribosomal subunit protein bL31B from Clavibacter michiganensis subsp. michiganensis (strain NCPPB 382).